We begin with the raw amino-acid sequence, 320 residues long: Beta-sarcoglycan (320 aa).

Low complexity predominate over residues 1 to 10 (MAAAAAAAAA). Residues 1–34 (MAAAAAAAAATEQQSSNGPVKKSMREKAVERRNV) are disordered. The Cytoplasmic segment spans residues 1 to 67 (MAAAAAAAAA…GLRGRKGNLA (67 aa)). Residues 23-34 (SMREKAVERRNV) show a composition bias toward basic and acidic residues. A helical; Signal-anchor for type II membrane protein transmembrane segment spans residues 68-88 (ICVIVLLFILAVINLLITLVI). The Extracellular portion of the chain corresponds to 89–320 (WAVIRIGPNG…VADNPCGNTH (232 aa)). N-linked (GlcNAc...) asparagine glycans are attached at residues N160, N213, and N260. 2 disulfides stabilise this stretch: C290–C316 and C292–C309.

It belongs to the sarcoglycan beta/delta/gamma/zeta family. As to quaternary structure, cross-link to form 2 major subcomplexes: one consisting of SGCB, SGCD and SGCG and the other consisting of SGCB and SGCD. The association between SGCB and SGCG is particularly strong while SGCA is loosely associated with the other sarcoglycans. Post-translationally, disulfide bonds are present.

The protein resides in the cell membrane. It is found in the sarcolemma. The protein localises to the cytoplasm. Its subcellular location is the cytoskeleton. Its function is as follows. Component of the sarcoglycan complex, a subcomplex of the dystrophin-glycoprotein complex which forms a link between the F-actin cytoskeleton and the extracellular matrix. In Mesocricetus auratus (Golden hamster), this protein is Beta-sarcoglycan (SGCB).